A 217-amino-acid chain; its full sequence is Large ribosomal subunit protein uL1 (217 aa).

Belongs to the universal ribosomal protein uL1 family. Part of the 50S ribosomal subunit.

Functionally, binds directly to 23S rRNA. Probably involved in E site tRNA release. In terms of biological role, protein L1 is also a translational repressor protein, it controls the translation of its operon by binding to its mRNA. The protein is Large ribosomal subunit protein uL1 of Thermoplasma acidophilum (strain ATCC 25905 / DSM 1728 / JCM 9062 / NBRC 15155 / AMRC-C165).